The following is a 94-amino-acid chain: Large ribosomal subunit protein bL28A (94 aa).

Residues 63–94 (GHRGRRRAARAGSAPAHFARQAGSSLRTAAIL) are disordered. Low complexity predominate over residues 72–82 (RAGSAPAHFAR). A compositionally biased stretch (polar residues) spans 84-94 (AGSSLRTAAIL).

Belongs to the bacterial ribosomal protein bL28 family.

The sequence is that of Large ribosomal subunit protein bL28A (rpmB1) from Mycobacterium bovis (strain ATCC BAA-935 / AF2122/97).